The following is a 272-amino-acid chain: Ribosomal RNA small subunit methyltransferase A (272 aa).

The S-adenosyl-L-methionine site is built by N18, L20, G45, E66, D91, and N113.

It belongs to the class I-like SAM-binding methyltransferase superfamily. rRNA adenine N(6)-methyltransferase family. RsmA subfamily.

Its subcellular location is the cytoplasm. It catalyses the reaction adenosine(1518)/adenosine(1519) in 16S rRNA + 4 S-adenosyl-L-methionine = N(6)-dimethyladenosine(1518)/N(6)-dimethyladenosine(1519) in 16S rRNA + 4 S-adenosyl-L-homocysteine + 4 H(+). In terms of biological role, specifically dimethylates two adjacent adenosines (A1518 and A1519) in the loop of a conserved hairpin near the 3'-end of 16S rRNA in the 30S particle. May play a critical role in biogenesis of 30S subunits. The polypeptide is Ribosomal RNA small subunit methyltransferase A (Serratia proteamaculans (strain 568)).